A 238-amino-acid polypeptide reads, in one-letter code: Transcriptional activator HAC1 (238 aa).

Positions M1–E39 are disordered. Residues E7–S24 show a composition bias toward polar residues. The bZIP domain maps to E39 to A102. Residues R41–R61 form a basic motif region. The leucine-zipper stretch occupies residues L67–L74. Residues G115 to D152 form a disordered region. Residues S117–S134 show a composition bias toward low complexity.

This sequence belongs to the bZIP family. As to quaternary structure, homodimer.

The protein resides in the nucleus. Its function is as follows. Transcriptional activator involved in the unfolded protein response (UPR) pathway. Recognizes and binds to the UPR element (UPRE) in the promoter of UPR-regulated genes such as KAR2, PDI1, EUG1 and FKB2. Increases the synthesis of endoplasmic reticulum-resident proteins required for protein folding as well as components of the secretory pathway. The chain is Transcriptional activator HAC1 (HAC1) from Saccharomyces cerevisiae (strain ATCC 204508 / S288c) (Baker's yeast).